The chain runs to 103 residues: Insulin (103 aa).

An N-terminal signal peptide occupies residues 1 to 20 (IQSLPLLALLALSGPGTSHA). Intrachain disulfides connect Cys27–Cys89, Cys39–Cys102, and Cys88–Cys93. A propeptide spans 53–80 (DAEHPLVNGPLHGEVGDLPFQQEEFEKV) (c peptide).

The protein belongs to the insulin family. As to quaternary structure, heterodimer of a B chain and an A chain linked by two disulfide bonds.

Its subcellular location is the secreted. Insulin decreases blood glucose concentration. It increases cell permeability to monosaccharides, amino acids and fatty acids. It accelerates glycolysis, the pentose phosphate cycle, and glycogen synthesis in liver. The protein is Insulin (INS) of Selasphorus rufus (Rufous hummingbird).